Here is a 333-residue protein sequence, read N- to C-terminus: DNA-directed RNA polymerase subunit alpha (333 aa).

Residues 1–251 (MEKLTKIKHR…AHFQTIGDLT (251 aa)) form an alpha N-terminal domain (alpha-NTD) region. Positions 272-333 (DMEIRLLNLS…KLNEYGKLKN (62 aa)) are alpha C-terminal domain (alpha-CTD).

Belongs to the RNA polymerase alpha chain family. In terms of assembly, homodimer. The RNAP catalytic core consists of 2 alpha, 1 beta, 1 beta' and 1 omega subunit. When a sigma factor is associated with the core the holoenzyme is formed, which can initiate transcription.

It catalyses the reaction RNA(n) + a ribonucleoside 5'-triphosphate = RNA(n+1) + diphosphate. DNA-dependent RNA polymerase catalyzes the transcription of DNA into RNA using the four ribonucleoside triphosphates as substrates. This chain is DNA-directed RNA polymerase subunit alpha, found in Mycoplasmopsis synoviae (strain 53) (Mycoplasma synoviae).